We begin with the raw amino-acid sequence, 387 residues long: Flap endonuclease 1 (387 aa).

An N-domain region spans residues 1–104; the sequence is MGILGLSKLI…GELAKRAERR (104 aa). Mg(2+) is bound at residue Asp-34. The DNA site is built by Arg-47 and Arg-70. Mg(2+) contacts are provided by Asp-86, Glu-158, Glu-160, Asp-179, and Asp-181. Residues 122 to 253 form an I-domain region; it reads GIEKFNRRLV…KRAIELINNY (132 aa). Glu-158 contributes to the DNA binding site. The DNA site is built by Gly-231 and Asp-233. A Mg(2+)-binding site is contributed by Asp-233. Residues 336-344 form an interaction with PCNA region; the sequence is TQVRLDSFF. A disordered region spans residues 345-387; it reads KTLPSTPNATNAAKRKAEEAKKSANNKKAKTSGGGGGRGRRPK.

The protein belongs to the XPG/RAD2 endonuclease family. FEN1 subfamily. Interacts with PCNA. Three molecules of FEN1 bind to one PCNA trimer with each molecule binding to one PCNA monomer. PCNA stimulates the nuclease activity without altering cleavage specificity. Requires Mg(2+) as cofactor. Phosphorylated. Phosphorylation upon DNA damage induces relocalization to the nuclear plasma.

It localises to the nucleus. The protein localises to the nucleolus. The protein resides in the nucleoplasm. It is found in the mitochondrion. Functionally, structure-specific nuclease with 5'-flap endonuclease and 5'-3' exonuclease activities involved in DNA replication and repair. During DNA replication, cleaves the 5'-overhanging flap structure that is generated by displacement synthesis when DNA polymerase encounters the 5'-end of a downstream Okazaki fragment. It enters the flap from the 5'-end and then tracks to cleave the flap base, leaving a nick for ligation. Also involved in the long patch base excision repair (LP-BER) pathway, by cleaving within the apurinic/apyrimidinic (AP) site-terminated flap. Acts as a genome stabilization factor that prevents flaps from equilibrating into structures that lead to duplications and deletions. Also possesses 5'-3' exonuclease activity on nicked or gapped double-stranded DNA, and exhibits RNase H activity. Also involved in replication and repair of rDNA and in repairing mitochondrial DNA. The sequence is that of Flap endonuclease 1 from Drosophila yakuba (Fruit fly).